A 252-amino-acid polypeptide reads, in one-letter code: 14-3-3 protein 7 (252 aa).

The protein belongs to the 14-3-3 family. As to quaternary structure, homodimer.

The protein is 14-3-3 protein 7 (TFT7) of Solanum lycopersicum (Tomato).